The primary structure comprises 189 residues: GMP synthase [glutamine-hydrolyzing] subunit A (189 aa).

Residues 5–189 (KILVVNNYGQ…TNFFEVCDRY (185 aa)) enclose the Glutamine amidotransferase type-1 domain. Cysteine 79 functions as the Nucleophile in the catalytic mechanism. Residues histidine 166 and glutamate 168 contribute to the active site.

Heterodimer composed of a glutamine amidotransferase subunit (A) and a GMP-binding subunit (B).

The enzyme catalyses XMP + L-glutamine + ATP + H2O = GMP + L-glutamate + AMP + diphosphate + 2 H(+). It functions in the pathway purine metabolism; GMP biosynthesis; GMP from XMP (L-Gln route): step 1/1. Functionally, catalyzes the synthesis of GMP from XMP. The protein is GMP synthase [glutamine-hydrolyzing] subunit A of Methanosarcina acetivorans (strain ATCC 35395 / DSM 2834 / JCM 12185 / C2A).